Here is a 79-residue protein sequence, read N- to C-terminus: Acyl carrier protein (79 aa).

The region spanning 2-77 (DNIEQRVKKI…QAIDYARANV (76 aa)) is the Carrier domain. Residue serine 37 is modified to O-(pantetheine 4'-phosphoryl)serine.

It belongs to the acyl carrier protein (ACP) family. 4'-phosphopantetheine is transferred from CoA to a specific serine of apo-ACP by AcpS. This modification is essential for activity because fatty acids are bound in thioester linkage to the sulfhydryl of the prosthetic group.

The protein localises to the cytoplasm. It functions in the pathway lipid metabolism; fatty acid biosynthesis. In terms of biological role, carrier of the growing fatty acid chain in fatty acid biosynthesis. The protein is Acyl carrier protein of Burkholderia cenocepacia (strain HI2424).